Reading from the N-terminus, the 154-residue chain is NADPH-dependent 7-cyano-7-deazaguanine reductase (154 aa).

The segment covering 1 to 23 has biased composition (polar residues); that stretch reads MPNTDVSSLSMLGQQTETAQSPE. Positions 1–26 are disordered; that stretch reads MPNTDVSSLSMLGQQTETAQSPEQAV. The active-site Thioimide intermediate is Cys-52. Residue Asp-59 is the Proton donor of the active site. Residues 74-76 and 93-94 contribute to the substrate site; these read VES and HE.

This sequence belongs to the GTP cyclohydrolase I family. QueF type 1 subfamily.

Its subcellular location is the cytoplasm. The catalysed reaction is 7-aminomethyl-7-carbaguanine + 2 NADP(+) = 7-cyano-7-deazaguanine + 2 NADPH + 3 H(+). It functions in the pathway tRNA modification; tRNA-queuosine biosynthesis. Its function is as follows. Catalyzes the NADPH-dependent reduction of 7-cyano-7-deazaguanine (preQ0) to 7-aminomethyl-7-deazaguanine (preQ1). In Rhizobium leguminosarum bv. trifolii (strain WSM2304), this protein is NADPH-dependent 7-cyano-7-deazaguanine reductase.